Here is a 127-residue protein sequence, read N- to C-terminus: Fluoride-specific ion channel FluC (127 aa).

Helical transmembrane passes span 6–26, 37–57, 67–87, and 96–116; these read LAISLGASAGAVSRWLLGLGF, TLLANLLGGYLIGIAVTFFAA, LLVITGFLGGLTTFSTFSAEV, and LLWAGGAIAVHVIGSLVMTLL. Na(+) is bound by residues G75 and T78.

Belongs to the fluoride channel Fluc/FEX (TC 1.A.43) family.

It is found in the cell inner membrane. It catalyses the reaction fluoride(in) = fluoride(out). Na(+) is not transported, but it plays an essential structural role and its presence is essential for fluoride channel function. Its function is as follows. Fluoride-specific ion channel. Important for reducing fluoride concentration in the cell, thus reducing its toxicity. The protein is Fluoride-specific ion channel FluC of Tolumonas auensis (strain DSM 9187 / NBRC 110442 / TA 4).